The sequence spans 318 residues: Acetyl-coenzyme A carboxylase carboxyl transferase subunit alpha (318 aa).

One can recognise a CoA carboxyltransferase C-terminal domain in the interval 38 to 292 (ALDRKAEEML…GEAIAAMLGE (255 aa)).

This sequence belongs to the AccA family. As to quaternary structure, acetyl-CoA carboxylase is a heterohexamer composed of biotin carboxyl carrier protein (AccB), biotin carboxylase (AccC) and two subunits each of ACCase subunit alpha (AccA) and ACCase subunit beta (AccD).

The protein resides in the cytoplasm. The enzyme catalyses N(6)-carboxybiotinyl-L-lysyl-[protein] + acetyl-CoA = N(6)-biotinyl-L-lysyl-[protein] + malonyl-CoA. It participates in lipid metabolism; malonyl-CoA biosynthesis; malonyl-CoA from acetyl-CoA: step 1/1. Component of the acetyl coenzyme A carboxylase (ACC) complex. First, biotin carboxylase catalyzes the carboxylation of biotin on its carrier protein (BCCP) and then the CO(2) group is transferred by the carboxyltransferase to acetyl-CoA to form malonyl-CoA. The chain is Acetyl-coenzyme A carboxylase carboxyl transferase subunit alpha from Paracoccus denitrificans (strain Pd 1222).